A 313-amino-acid chain; its full sequence is MIFSTLEHILTHISFSIVSIVITIHLITLLVDEIVKLYDSSEKGIIVTFFCITGLLVTRWISSGHFPLSDLYESLIFLSWSFSLIHIIPYFKKNVLILSKIIGPSAIFTQGFATSGILTEIHQSVILVPALQSEWLIMHVSMMILGYAALLCGSLLSVALLVITFRKNRQLFYKSNGFLNESFFLGENVLQNTYFFSAKNYYRSQLIQQLDYWSYRVISLGFTFLTIGILSGAVWANEAWGSYWNWDPKETWAFITWIVFAIYLHTRTNRNLRGANSAIVASIGFLIIWICYFGVNLLGIGLHSYGSFPSTFN.

A run of 8 helical transmembrane segments spans residues 9–29 (ILTH…LITL), 44–64 (GIIV…ISSG), 71–91 (LYES…IPYF), 101–121 (IIGP…LTEI), 143–163 (MILG…LLVI), 217–237 (VISL…VWAN), 244–264 (WNWD…AIYL), and 278–298 (AIVA…VNLL).

Belongs to the CcmF/CycK/Ccl1/NrfE/CcsA family. In terms of assembly, may interact with Ccs1.

It localises to the plastid. It is found in the chloroplast thylakoid membrane. Functionally, required during biogenesis of c-type cytochromes (cytochrome c6 and cytochrome f) at the step of heme attachment. This is Cytochrome c biogenesis protein CcsA from Nicotiana tomentosiformis (Tobacco).